The primary structure comprises 90 residues: Protein LIM3 (90 aa).

Positions 1-26 are cleaved as a signal peptide; sequence MAAVKFLVCSVLLVVLATQSEIGLAQ. Cystine bridges form between C28–C65, C38–C54, C55–C80, and C67–C87.

It belongs to the A9/FIL1 family.

The protein resides in the secreted. This chain is Protein LIM3 (LIM3), found in Lilium longiflorum (Trumpet lily).